A 60-amino-acid polypeptide reads, in one-letter code: UPF0434 protein KPK_3615 (60 aa).

Belongs to the UPF0434 family.

This Klebsiella pneumoniae (strain 342) protein is UPF0434 protein KPK_3615.